We begin with the raw amino-acid sequence, 821 residues long: MDLAAAAEPGAGSQHLEVRDEVAEKCQKLFLDFLEEFQNSDGEIKYLQLAEELIRPERNTLVVSFVDLEQFNQQLSTTIQEEFYRVYPYLCRALKTFVKDRKEIPLAKDFYVAFQDLPTRHKIRELTSSRIGLLTRISGQVVRTHPVHPELVSGTFLCLDCQTVIKDVEQQFKYTQPNICRNPVCANRRRFLLDTNKSRFVDFQKVRIQETQAELPRGSIPRSLEVILRAEAVESAQAGDKCDFTGTLIVVPDVSKLSTPGARAETDSRVSGVDGYETEGVRGLRALGVRDLSYRLVFLACCVAPTNPRFGGKELRDEEQTAESIKNQMTVKEWEKVFEMSQDKNLYHNLCTSLFPTIHGNDEVKRGVLLMLFGGVPKTTGEGTSLRGDINVCIVGDPSTAKSQFLKHVEEFSPRAVYTSGKASIAAGLTAAVVRDEESHEFVIEAGALMLADNGVCCIDEFDKMDVRDQVAIHEAMEQQTISITKAGVKATLNARTSILAAANPISGHYDRSKSLKQNINLSAPIMSRFDLFFILVDECNEVTDYAIARRIVDLHSRIEDSIDRVYSLDEIRRYLLFARQFKPKISKESEDFIVEQYKRLRQRDGSGVTKSSWRITVRQLESMIRLSEAMARMHCCDEVQPKHVKEAFRLLNKSIIRVETPDVNLDQEEDAQMEVDEGPDGINGHADSPAPASGINGHSEDMNQDSVPKASLRLGFSEYCRISNLIVLHLRKMEEEEDESALKRSELVNWYLKEIESEIDSEEELINKKRIIEKVIYRLTHYDHVLIELTQAGLKGSTEGSESYEEDPYLVVNPNYLLED.

At Met1 the chain carries N-acetylmethionine. Ser13, Ser219, and Ser271 each carry phosphoserine. Thr278 is modified (phosphothreonine). The MCM domain maps to 346–553 (LYHNLCTSLF…TDYAIARRIV (208 aa)). Residues His359, Ser399, Thr400, Ala401, Lys402, Ser403, and Asn504 each coordinate ATP. Residues 528-531 (SRFD) carry the Arginine finger motif. ADP contacts are provided by Arg619 and Glu622. Lys643 carries the N6-acetyllysine modification. The disordered stretch occupies residues 676 to 706 (VDEGPDGINGHADSPAPASGINGHSEDMNQD). 2 positions are modified to phosphoserine: Ser689 and Ser762. A Phosphothreonine modification is found at Thr791.

The protein belongs to the MCM family. In terms of assembly, component of the MCM2-7 complex. The complex forms a toroidal hexameric ring with the proposed subunit order MCM2-MCM6-MCM4-MCM7-MCM3-MCM5. Component of the CMG helicase complex, a hexameric ring of related MCM2-7 subunits stabilized by CDC45 and the tetrameric GINS complex. May interact with MCM10. Interacts with TIPIN. Interacts with CDT1. Interacts with MCMBP. Interacts with DDI2. O-glycosylated (O-GlcNAcylated), in a cell cycle-dependent manner.

It is found in the nucleus. The protein resides in the chromosome. It catalyses the reaction ATP + H2O = ADP + phosphate + H(+). Acts as a component of the MCM2-7 complex (MCM complex) which is the replicative helicase essential for 'once per cell cycle' DNA replication initiation and elongation in eukaryotic cells. Core component of CDC45-MCM-GINS (CMG) helicase, the molecular machine that unwinds template DNA during replication, and around which the replisome is built. The active ATPase sites in the MCM2-7 ring are formed through the interaction surfaces of two neighboring subunits such that a critical structure of a conserved arginine finger motif is provided in trans relative to the ATP-binding site of the Walker A box of the adjacent subunit. The six ATPase active sites, however, are likely to contribute differentially to the complex helicase activity. The chain is DNA replication licensing factor MCM6 (MCM6) from Bos taurus (Bovine).